A 328-amino-acid polypeptide reads, in one-letter code: Malate dehydrogenase (328 aa).

11–17 (GAAGQIG) serves as a coordination point for NAD(+). Arginine 94 and arginine 100 together coordinate substrate. Residues asparagine 107, glutamine 114, and 131-133 (VGN) contribute to the NAD(+) site. Substrate-binding residues include asparagine 133 and arginine 164. Histidine 189 serves as the catalytic Proton acceptor.

The protein belongs to the LDH/MDH superfamily. MDH type 2 family.

The catalysed reaction is (S)-malate + NAD(+) = oxaloacetate + NADH + H(+). Functionally, catalyzes the reversible oxidation of malate to oxaloacetate. The polypeptide is Malate dehydrogenase (Acinetobacter baylyi (strain ATCC 33305 / BD413 / ADP1)).